The sequence spans 187 residues: Aspartic protease inhibitor 9 (187 aa).

N-linked (GlcNAc...) asparagine glycosylation occurs at Asn19. Disulfide bonds link Cys48–Cys93 and Cys142–Cys158.

It belongs to the protease inhibitor I3 (leguminous Kunitz-type inhibitor) family. Glycosylated. In terms of tissue distribution, tubers.

It is found in the vacuole. In terms of biological role, inhibitor of cathepsin D (aspartic protease) and trypsin (serine protease). May protect the plant by inhibiting proteases of invading organisms. The protein is Aspartic protease inhibitor 9 of Solanum tuberosum (Potato).